A 517-amino-acid chain; its full sequence is Gallate 1-beta-glucosyltransferase 84A24 (517 aa).

Catalysis depends on histidine 19, which acts as the Proton acceptor. Histidine 19 contacts an anthocyanidin. UDP-alpha-D-glucose contacts are provided by glutamine 344, histidine 359, tryptophan 362, asparagine 363, serine 364, and glutamate 367. Glycine 382 is a binding site for an anthocyanidin. 2 residues coordinate UDP-alpha-D-glucose: aspartate 383 and glutamine 384.

The protein belongs to the UDP-glycosyltransferase family. As to expression, highly expressed in leaf. Also expressed in peel, stem, root and aril.

The protein resides in the cytoplasm. It catalyses the reaction 3,4,5-trihydroxybenzoate + UDP-alpha-D-glucose = 1-O-galloyl-beta-D-glucose + UDP. The catalysed reaction is 3,4-dihydroxybenzoate + UDP-alpha-D-glucose = 1-O-(3,4-dihydroxy-benzoyl)-beta-D-glucose + UDP. It carries out the reaction 4-hydroxybenzoate + UDP-alpha-D-glucose = 4-(beta-D-glucosyloxy)benzoate + UDP + H(+). The enzyme catalyses (E)-cinnamate + UDP-alpha-D-glucose = 1-O-(trans-cinnamoyl)-beta-D-glucose + UDP. It catalyses the reaction (E)-sinapate + UDP-alpha-D-glucose = 1-O-(trans-sinapoyl)-beta-D-glucose + UDP. The catalysed reaction is (E)-4-coumarate + UDP-alpha-D-glucose = 1-O-(trans-4-coumaroyl)-beta-D-glucose + UDP. It carries out the reaction (E)-caffeate + UDP-alpha-D-glucose = 1-O-[(E)-caffeoyl]-beta-D-glucose + UDP. The enzyme catalyses (E)-ferulate + UDP-alpha-D-glucose = 1-O-[(E)-feruloyl]-beta-D-glucose + UDP. It catalyses the reaction genistein + UDP-alpha-D-glucose = genistein 7-O-beta-D-glucoside + UDP + H(+). The catalysed reaction is apigenin + UDP-alpha-D-glucose = apigenin 7-O-beta-D-glucoside + UDP + H(+). It carries out the reaction luteolin + UDP-alpha-D-glucose = luteolin 7-O-beta-D-glucoside + UDP + H(+). Glucosyltransferase that catalyzes the formation of 1-O-beta-D-glucose esters with hydroxybenzoic acids and cinnamic acid including its derivatives as preferred glucosyl acceptors. Has significant activity with gallic acid (3,4,5-trihydroxybenzoic acid), 3,4-dihydroxybenzoic acid, 4-hydroxybenzoic acid, cinnamic acid, sinapic acid, coumaric acid, caffeic acid and ferulic acid in vitro. Gallic acid is the predicted native substrate of the enzyme, which thus catalyzes the formation of 1-O-galloyl-beta-D-glucose, the first committed step of hydrolyzable tannins (HTs) biosynthesis, with punicalagin isomers being the major HTs of pomegranate. Catalyzes the formation of flavonoid glucosides with genistein, apigenin and luteolin in vitro. Has low activity with benzoic acid, 2-hydroxybenzoic acid, 3-hydroxybenzoic acid, 2,4-dihydroxybenzoic acid, naringenin and quercetin. No activity with catechol, resveratrol, chlorogenic acid, catechin and epicatechin (building blocks of proanthocyanidins) or cyanidin, delphinidin and pelargonidin (the three anthocyanidins). This Punica granatum (Pomegranate) protein is Gallate 1-beta-glucosyltransferase 84A24.